A 553-amino-acid polypeptide reads, in one-letter code: Hydroxylamine reductase (553 aa).

Residues Cys3, Cys6, Cys18, and Cys25 each coordinate [2Fe-2S] cluster. Hybrid [4Fe-2O-2S] cluster contacts are provided by His252, Glu276, Cys320, Cys408, Cys436, Cys461, Glu495, and Lys497. The residue at position 408 (Cys408) is a Cysteine persulfide.

Belongs to the HCP family. It depends on [2Fe-2S] cluster as a cofactor. Hybrid [4Fe-2O-2S] cluster is required as a cofactor.

The protein resides in the cytoplasm. The catalysed reaction is A + NH4(+) + H2O = hydroxylamine + AH2 + H(+). In terms of biological role, catalyzes the reduction of hydroxylamine to form NH(3) and H(2)O. In Tolumonas auensis (strain DSM 9187 / NBRC 110442 / TA 4), this protein is Hydroxylamine reductase.